The sequence spans 417 residues: FAD-dependent monooxygenase aptC (417 aa).

Residues Met1 to Ala18 form the signal peptide. FAD is bound by residues Glu32, Ala43, Arg117, Asp332, and Gly345.

Belongs to the paxM FAD-dependent monooxygenase family. Requires FAD as cofactor.

The catalysed reaction is 3,6,8,9-tetrahydroxy-1-oxo-3-(2-oxopropyl)-1,2,3,4-tetrahydroanthracene-2-carboxyl-[ACP] + NADPH + O2 + H(+) = 2,3,6,8,9-pentahydroxy-1-oxo-3-(2-oxopropyl)-1,2,3,4-tetrahydroanthracene-2-carboxyl-[ACP] + NADP(+) + H2O. It functions in the pathway secondary metabolite biosynthesis. Functionally, FAD-dependent monooxygenase; part of the gene cluster that mediates the biosynthesis of asperthecin, an anthraquinone pigment. Polyketide synthase (PKS) aptA catalyzes the formation of the aromatic polyketide from acetyl coenzyme A and seven malonyl coenzyme A molecules. Polyketide is subsequently hydrolyzed by the action of the hydrolase aptB into endocrocin-9-anthrone. Endocrocin-9-anthrone is then oxidized into endocrocin by the monooxygenase aptC. Endocrocin is likely to decarboxylate spontaneously to form emodin which explains why there is no decarboxylase in the asperthecin biosynthesis cluster. Finally, aptC or another endogenous oxygenase catalyzes additional oxidation steps to form asperthecin. The protein is FAD-dependent monooxygenase aptC of Emericella nidulans (strain FGSC A4 / ATCC 38163 / CBS 112.46 / NRRL 194 / M139) (Aspergillus nidulans).